A 462-amino-acid polypeptide reads, in one-letter code: Mitochondrial-processing peptidase subunit beta (462 aa).

The N-terminal 20 residues, 1-20, are a transit peptide targeting the mitochondrion; that stretch reads MFSRTASKFRNTRRLLSTIS. Residue His70 participates in Zn(2+) binding. Residue Glu73 is the Proton acceptor of the active site. Positions 74 and 150 each coordinate Zn(2+). Ser243 bears the Phosphoserine mark.

It belongs to the peptidase M16 family. As to quaternary structure, heterodimer of MAS2 (alpha) and MAS1 (beta) subunits, forming the mitochondrial processing protease (MPP) in which MAS2 is involved in substrate recognition and binding and MAS1 is the catalytic subunit. It depends on Zn(2+) as a cofactor.

The protein localises to the mitochondrion matrix. It carries out the reaction Release of N-terminal transit peptides from precursor proteins imported into the mitochondrion, typically with Arg in position P2.. Binding to MAS2 is required for catalytic activity. Inhibited by high levels (&gt; 1uM) of zinc. Inhibited by metal chelators ethylenediaminetetraacetic acid (EDTA) and O-phenanthroline. Catalytic subunit of the essential mitochondrial processing protease (MPP), which cleaves the mitochondrial sequence off newly imported precursors proteins. Preferentially, cleaves after an arginine at position P2. This chain is Mitochondrial-processing peptidase subunit beta, found in Saccharomyces cerevisiae (strain ATCC 204508 / S288c) (Baker's yeast).